The following is a 573-amino-acid chain: DNA damage-binding protein CMR1 (573 aa).

The tract at residues 27 to 94 (DSLNDSISRE…EMEKAEERKR (68 aa)) is disordered. A coiled-coil region spans residues 72 to 152 (TMEDSEEDKQ…EEIKKEEDST (81 aa)). Residues 79–94 (DKQMREEMEKAEERKR) show a composition bias toward basic and acidic residues. 7 WD repeats span residues 218 to 259 (ITQQ…DDET), 268 to 308 (PHGK…STEV), 319 to 357 (DYPLGVSDINVADNNLLYMTTLSGNFYRYDMRSPFKQGE), 361 to 401 (LHDK…QKNS), 418 to 456 (HSRLSVSCVDWNHDNHLVCNGYDDTVNVFDLSGSDKLPL), 495 to 538 (GRWV…LCHL), and 542 to 573 (DRMTAVPAVSMLHPTENWCVGGSASGKVYLFE).

This sequence belongs to the WD repeat DDB2/WDR76 family.

Its function is as follows. DNA-binding protein that binds to both single- and double-stranded DNA. Binds preferentially to UV-damaged DNA. May be involved in DNA-metabolic processes. The sequence is that of DNA damage-binding protein CMR1 from Meyerozyma guilliermondii (strain ATCC 6260 / CBS 566 / DSM 6381 / JCM 1539 / NBRC 10279 / NRRL Y-324) (Yeast).